We begin with the raw amino-acid sequence, 136 residues long: T-cell receptor beta chain V region LB2 (136 aa).

The signal sequence occupies residues 1 to 21 (MNKWVFCWVTLCLLTVETTHG). Residues 22–116 (DGGIITQTPK…EMTVFLCASS (95 aa)) are v segment. The cysteines at positions 45 and 113 are disulfide-linked. A d segment region spans residues 117–120 (IRLA). The tract at residues 121 to 136 (SAETLYFGSGTRLTVL) is j segment.

The chain is T-cell receptor beta chain V region LB2 from Mus musculus (Mouse).